The chain runs to 226 residues: Movement and silencing protein TGBp1 (226 aa).

A (+)RNA virus helicase ATP-binding domain is found at 1-138; the sequence is MDILIISLKS…IASCGFDFET (138 aa). The (+)RNA virus helicase C-terminal domain maps to 139 to 226; sequence NSQEEGHLEV…KGLTYVRAGT (88 aa).

Belongs to the Tymovirales TGBp1 protein family. As to quaternary structure, homodimer and homooligomer. Interacts with capsid protein. Interacts with host AGO1; this interaction targets the host protein for degradation, thereby suppressing the antiviral RNA silencing.

The protein resides in the host cytoplasm. Transports viral genome to neighboring plant cells directly through plasmosdesmata, without any budding. The movement protein allows efficient cell to cell propagation, by bypassing the host cell wall barrier. Increases plasmodesma size exclusion limit. Acts as a suppressor of RNA-mediated gene silencing, also known as post-transcriptional gene silencing (PTGS), a mechanism of plant viral defense that limits the accumulation of viral RNAs. The polypeptide is Movement and silencing protein TGBp1 (Brassica campestris (Field mustard)).